The sequence spans 216 residues: Large ribosomal subunit protein uL3 (216 aa).

Residues 133 to 145 (GRATHGNSRSHNV) show a composition bias toward polar residues. Residues 133-153 (GRATHGNSRSHNVPGSIGMAQ) form a disordered region. An N5-methylglutamine modification is found at Gln153.

This sequence belongs to the universal ribosomal protein uL3 family. In terms of assembly, part of the 50S ribosomal subunit. Forms a cluster with proteins L14 and L19. In terms of processing, methylated by PrmB.

One of the primary rRNA binding proteins, it binds directly near the 3'-end of the 23S rRNA, where it nucleates assembly of the 50S subunit. This chain is Large ribosomal subunit protein uL3, found in Burkholderia cenocepacia (strain ATCC BAA-245 / DSM 16553 / LMG 16656 / NCTC 13227 / J2315 / CF5610) (Burkholderia cepacia (strain J2315)).